We begin with the raw amino-acid sequence, 738 residues long: Ethylene receptor (738 aa).

3 consecutive transmembrane segments (helical) span residues 23 to 43 (ISDF…IYFV), 54 to 74 (VLVQ…INLW), and 92 to 112 (VLTA…IPDL). Residues Cys-65 and His-69 each coordinate Cu cation. The region spanning 158–307 (DRHTILKTTL…VVADQVAVAL (150 aa)) is the GAF domain. The 240-residue stretch at 350–589 (VMNHEMRTPM…IFIVKLGFAE (240 aa)) folds into the Histidine kinase domain. Residue His-353 is modified to Phosphohistidine; by autocatalysis. In terms of domain architecture, Response regulatory spans 612–729 (PGLKVLVMDD…KMRSVLSELL (118 aa)). A 4-aspartylphosphate modification is found at Asp-660.

It belongs to the ethylene receptor family. In terms of assembly, homodimer; disulfide-linked. Requires Cu cation as cofactor. Post-translationally, activation probably requires a transfer of a phosphate group between a His in the transmitter domain and an Asp of the receiver domain.

It is found in the endoplasmic reticulum membrane. The enzyme catalyses ATP + protein L-histidine = ADP + protein N-phospho-L-histidine.. In terms of biological role, may act early in the ethylene signal transduction pathway, possibly as an ethylene receptor, or as a regulator of the pathway. This chain is Ethylene receptor (ETR1), found in Prunus persica (Peach).